Consider the following 299-residue polypeptide: Putative transposase InsZ (299 aa).

Residues 276–291 are compositionally biased toward basic residues; that stretch reads PSRPRSVKISKTRYPV. Residues 276–299 form a disordered region; the sequence is PSRPRSVKISKTRYPVKHSAAPLK.

The chain is Putative transposase InsZ (insZ) from Escherichia coli (strain K12).